The primary structure comprises 261 residues: Phosphatidylglycerol--prolipoprotein diacylglyceryl transferase (261 aa).

The next 4 membrane-spanning stretches (helical) occupy residues 13-33, 50-70, 86-106, and 112-132; these read LQIR…YWYI, VISW…ILFY, WNGG…MYIF, and IDVL…IFFG. Arginine 133 is a binding site for a 1,2-diacyl-sn-glycero-3-phospho-(1'-sn-glycerol). 3 helical membrane-spanning segments follow: residues 169 to 189, 197 to 217, and 232 to 252; these read LYEA…LFFF, GMLS…IEFV, and ITMG…FIKL.

It belongs to the Lgt family.

It is found in the cell inner membrane. The enzyme catalyses L-cysteinyl-[prolipoprotein] + a 1,2-diacyl-sn-glycero-3-phospho-(1'-sn-glycerol) = an S-1,2-diacyl-sn-glyceryl-L-cysteinyl-[prolipoprotein] + sn-glycerol 1-phosphate + H(+). Its pathway is protein modification; lipoprotein biosynthesis (diacylglyceryl transfer). Functionally, catalyzes the transfer of the diacylglyceryl group from phosphatidylglycerol to the sulfhydryl group of the N-terminal cysteine of a prolipoprotein, the first step in the formation of mature lipoproteins. In Ehrlichia canis (strain Jake), this protein is Phosphatidylglycerol--prolipoprotein diacylglyceryl transferase.